Reading from the N-terminus, the 288-residue chain is Polyamine aminopropyltransferase (288 aa).

The 230-residue stretch at 9-238 (ETLHDQFGQY…GIMTFAWATD (230 aa)) folds into the PABS domain. Q33 is an S-methyl-5'-thioadenosine binding site. Spermidine contacts are provided by H64 and D88. S-methyl-5'-thioadenosine is bound by residues E108 and 140-141 (DG). The active-site Proton acceptor is the D158. A spermidine-binding site is contributed by 158-161 (DCTD). Residue P165 participates in S-methyl-5'-thioadenosine binding.

This sequence belongs to the spermidine/spermine synthase family. As to quaternary structure, homodimer or homotetramer.

The protein localises to the cytoplasm. It catalyses the reaction S-adenosyl 3-(methylsulfanyl)propylamine + putrescine = S-methyl-5'-thioadenosine + spermidine + H(+). It functions in the pathway amine and polyamine biosynthesis; spermidine biosynthesis; spermidine from putrescine: step 1/1. In terms of biological role, catalyzes the irreversible transfer of a propylamine group from the amino donor S-adenosylmethioninamine (decarboxy-AdoMet) to putrescine (1,4-diaminobutane) to yield spermidine. This is Polyamine aminopropyltransferase from Shigella boydii serotype 18 (strain CDC 3083-94 / BS512).